Reading from the N-terminus, the 156-residue chain is Endoribonuclease YbeY (156 aa).

Residues His-117, His-121, and His-127 each contribute to the Zn(2+) site.

The protein belongs to the endoribonuclease YbeY family. The cofactor is Zn(2+).

It is found in the cytoplasm. Functionally, single strand-specific metallo-endoribonuclease involved in late-stage 70S ribosome quality control and in maturation of the 3' terminus of the 16S rRNA. This Shewanella pealeana (strain ATCC 700345 / ANG-SQ1) protein is Endoribonuclease YbeY.